Consider the following 303-residue polypeptide: Probable cell division protein WhiA (303 aa).

Positions 272–303 form a DNA-binding region, H-T-H motif; sequence SIQQVADALEFPITKSGVNHRLRKINKIADDL.

The protein belongs to the WhiA family.

Functionally, involved in cell division and chromosome segregation. This is Probable cell division protein WhiA from Streptococcus pyogenes serotype M3 (strain ATCC BAA-595 / MGAS315).